Consider the following 1630-residue polypeptide: Patronin (1630 aa).

Residues 156-288 (QSYEQALLGW…LVVLLTDLFN (133 aa)) form the Calponin-homology (CH) domain. 2 disordered regions span residues 311–333 (NSFG…VQSN) and 355–446 (ASMH…DQLN). The segment covering 319–333 (RRSTPPNEYQTVQSN) has biased composition (polar residues). At threonine 322 the chain carries Phosphothreonine. The span at 358 to 394 (HSQQQQQLHQQQQHQQQYHQQPLQQHPSQSQLQIQQQ) shows a compositional bias: low complexity. Positions 404 to 419 (QAKEKTNVESKADERG) are enriched in basic and acidic residues. Phosphoserine is present on residues serine 422, serine 431, serine 441, serine 460, serine 463, and serine 466. The segment covering 432 to 446 (QLTIENFGGSQDQLN) has biased composition (polar residues). The tract at residues 486-589 (LQLGYDTDSG…SMPASPAAWQ (104 aa)) is disordered. Phosphothreonine is present on threonine 492. 4 positions are modified to phosphoserine: serine 494, serine 496, serine 513, and serine 530. Residues 495-507 (GSEKQDRETEKYS) are compositionally biased toward basic and acidic residues. Over residues 513–529 (SVDNVPTVSSHNLSNAG) the composition is skewed to polar residues. The span at 576–587 (SSTSSMPASPAA) shows a compositional bias: low complexity. A coiled-coil region spans residues 601–639 (ENASKLSTIRMKLEEKRRRIEQDKRKIEMALLRHQEKED). 7 disordered regions span residues 726–753 (VSAY…PMPM), 872–967 (QQHQ…GMPM), 1005–1042 (DFVH…YDSG), 1055–1186 (NLTY…NKYT), 1200–1241 (GAMS…NAEA), 1284–1315 (EAKA…EEQM), and 1335–1459 (EREG…GVER). Low complexity-rich tracts occupy residues 738–750 (PYQQ…QQQP) and 872–896 (QQHQ…SPGS). Residues 902–914 (NGGGGGGGGGGGE) are compositionally biased toward gly residues. Positions 919-947 (FQVQASPQHGQRQVSGSNGVQRQQSLTNL) are enriched in polar residues. 2 stretches are compositionally biased toward low complexity: residues 956-967 (PQNMGMPMGMPM) and 1008-1036 (HQQQ…GSSS). Serine 1034, serine 1035, serine 1036, and serine 1067 each carry phosphoserine. Polar residues predominate over residues 1065–1074 (RPSIQANSFQ). A compositionally biased stretch (basic residues) spans 1105–1116 (RPKPPLRAKRSP). Residues 1167 to 1184 (GLNNSNSVKSPGNATYNK) are compositionally biased toward polar residues. Residues 1218–1230 (QSPQQTQQPMSPT) show a composition bias toward low complexity. Serine 1219 and serine 1228 each carry phosphoserine. Residues 1277–1343 (QRRQQQEEAK…AEREGKTLDR (67 aa)) are a coiled coil. Residues 1335-1348 (EREGKTLDRPDLHV) show a composition bias toward basic and acidic residues. Residues 1363 to 1374 (RQQRTTRPRPKT) are compositionally biased toward basic residues. Positions 1382 to 1400 (VDISEASSISSRGKKGSSS) are enriched in low complexity. Phosphoserine is present on residues serine 1398, serine 1399, and serine 1400. The span at 1401–1412 (NLTGYGQLSSNS) shows a compositional bias: polar residues. A compositionally biased stretch (basic and acidic residues) spans 1450-1459 (TSREPAGVER). A CKK domain is found at 1489-1623 (GPKLYKQPAA…QGKRVQLPSK (135 aa)).

It belongs to the CAMSAP1 family. As to quaternary structure, interacts with msps. Associates with the minus end of the microtubules.

Its subcellular location is the cytoplasm. It localises to the cytoskeleton. The protein localises to the microtubule organizing center. The protein resides in the spindle pole body. It is found in the centrosome. Its subcellular location is the perinuclear region. Functionally, key microtubule-organizing protein that specifically binds the minus-end of microtubules and regulates their dynamics and organization. Involved in mitotic spindle assembly. Regulates microtubule (MT) severing. Antagonizes the activity of the kinesin-13 depolymerase Klp10A thereby switching off the depolymerization of the MTs at their pole-associated minus ends, which turns off poleward flux and induces anaphase B spindle elongation. Involved in asymmetric cell division of sensory organ precursor (SOP) cells by playing a role in the asymmetric localization of Sara-expressing endosomes to the pIIa daughter cell but not to the pIIb cell. Klp98A targets Sara-expressing endosomes to the central spindle which is symmetrically arranged in early cell division. During late cytokinesis, central spindle asymmetry is generated by enrichment of Patronin on the pIIb side which protects microtubules from depolymerization by Klp10A while unprotected microtubules on the pIIa side are disassembled by Klp10A, leading to the asymmetric delivery of Sara-expressing endosomes to the pIIa daughter cell. In fat body cells, part of perinuclear non-centrosomal microtubule-organizing centers (ncMTOCs) which function to accommodate the organization of microtubule (MT) networks to control nuclear positioning and dynein motor-based retrograde endosomal trafficking. Within the ncMTOC, Msp300 and shot anchors the ncMTOC at the nuclear surface and recruits the MT minus-end regulators Patronin and Nin for assembly, anchoring and/or stabilization of circumferential and radial MTs at the ncMTOCs. This protein, and perhaps Nin, recruits msps to the ncMTOC for the gamma-tubulin-independent elongation of radial MTs. This Drosophila melanogaster (Fruit fly) protein is Patronin (Patronin).